The chain runs to 606 residues: Flagellar WD repeat-containing protein Pf20 (606 aa).

Residues 229–250 are disordered; that stretch reads PLPGAERSLGGQSTAAAGGGAS. 7 WD repeats span residues 324–354, 366–396, 408–438, 450–480, 492–522, 534–564, and 576–606; these read GHLL…KMWH, GHKD…KIWD, DHKQ…RLWD, GHVD…SVWD, GHQN…KLWD, TGKH…KAYS, and GHED…RLWS.

In terms of assembly, inter-microtubule bridges in flagella.

Its subcellular location is the cell projection. The protein resides in the cilium. It is found in the flagellum. The chain is Flagellar WD repeat-containing protein Pf20 (PF20) from Chlamydomonas reinhardtii (Chlamydomonas smithii).